We begin with the raw amino-acid sequence, 117 residues long: Cell division protein FtsB (117 aa).

Topologically, residues 1 to 6 (MRDWRW) are cytoplasmic. Residues 7–24 (MLLVLALLLGWLQYRFWF) form a helical membrane-spanning segment. Topologically, residues 25–117 (GPGNSGEVMM…QVGDHPADVP (93 aa)) are periplasmic. Residues 29 to 69 (SGEVMMLEAQVANQERDNEGLQQRNDALAAEVKDLKEGQSA) are a coiled coil.

This sequence belongs to the FtsB family. In terms of assembly, part of a complex composed of FtsB, FtsL and FtsQ.

It localises to the cell inner membrane. Its function is as follows. Essential cell division protein. May link together the upstream cell division proteins, which are predominantly cytoplasmic, with the downstream cell division proteins, which are predominantly periplasmic. The protein is Cell division protein FtsB of Stenotrophomonas maltophilia (strain K279a).